We begin with the raw amino-acid sequence, 157 residues long: SsrA-binding protein (157 aa).

The protein belongs to the SmpB family.

Its subcellular location is the cytoplasm. Required for rescue of stalled ribosomes mediated by trans-translation. Binds to transfer-messenger RNA (tmRNA), required for stable association of tmRNA with ribosomes. tmRNA and SmpB together mimic tRNA shape, replacing the anticodon stem-loop with SmpB. tmRNA is encoded by the ssrA gene; the 2 termini fold to resemble tRNA(Ala) and it encodes a 'tag peptide', a short internal open reading frame. During trans-translation Ala-aminoacylated tmRNA acts like a tRNA, entering the A-site of stalled ribosomes, displacing the stalled mRNA. The ribosome then switches to translate the ORF on the tmRNA; the nascent peptide is terminated with the 'tag peptide' encoded by the tmRNA and targeted for degradation. The ribosome is freed to recommence translation, which seems to be the essential function of trans-translation. This is SsrA-binding protein from Clostridium kluyveri (strain NBRC 12016).